We begin with the raw amino-acid sequence, 216 residues long: Cytidylate kinase (216 aa).

Residue 7-15 (GPSGTGKST) coordinates ATP.

This sequence belongs to the cytidylate kinase family. Type 1 subfamily.

It is found in the cytoplasm. The catalysed reaction is CMP + ATP = CDP + ADP. The enzyme catalyses dCMP + ATP = dCDP + ADP. The sequence is that of Cytidylate kinase from Chlamydia trachomatis serovar A (strain ATCC VR-571B / DSM 19440 / HAR-13).